A 367-amino-acid polypeptide reads, in one-letter code: Anthranilate phosphoribosyltransferase (367 aa).

5-phospho-alpha-D-ribose 1-diphosphate-binding positions include Gly-105, 108 to 109, Thr-113, 115 to 118, 133 to 141, and Gly-145; these read GD, NIST, and KHGNRAASS. Gly-105 contacts anthranilate. Ser-117 contributes to the Mg(2+) binding site. Position 136 (Asn-136) interacts with anthranilate. Arg-191 is a binding site for anthranilate. Residues Asp-249 and Glu-250 each coordinate Mg(2+).

This sequence belongs to the anthranilate phosphoribosyltransferase family. In terms of assembly, homodimer. The cofactor is Mg(2+).

The enzyme catalyses N-(5-phospho-beta-D-ribosyl)anthranilate + diphosphate = 5-phospho-alpha-D-ribose 1-diphosphate + anthranilate. It functions in the pathway amino-acid biosynthesis; L-tryptophan biosynthesis; L-tryptophan from chorismate: step 2/5. Its function is as follows. Catalyzes the transfer of the phosphoribosyl group of 5-phosphorylribose-1-pyrophosphate (PRPP) to anthranilate to yield N-(5'-phosphoribosyl)-anthranilate (PRA). In Corynebacterium jeikeium (strain K411), this protein is Anthranilate phosphoribosyltransferase.